We begin with the raw amino-acid sequence, 836 residues long: Protein O-mannosyl-transferase tmtc2 (836 aa).

Residues 1–21 form a helical membrane-spanning segment; it reads MIAELLSSALGLLLYLNTLGA. The Extracellular segment spans residues 22–77; the sequence is DFCYDDSRAIKTNQDLLPETPWNHIFFNDFWGTLLTHSGSHKSYRPLCTLSFRLNY. A helical transmembrane segment spans residues 78–98; sequence LFGGLDPWNYHLVNVLLHSAV. The Cytoplasmic portion of the chain corresponds to 99–107; it reads TGLFTNLCK. Residues 108–128 form a helical membrane-spanning segment; sequence ALFGSGCWTLIAGLLFASHPI. Over 129–132 the chain is Extracellular; sequence HTEA. Residues 133–153 form a helical membrane-spanning segment; sequence VSGIVGRADVGSGLFFLLSLL. The Cytoplasmic segment spans residues 154 to 164; sequence CYMKHCSTRGY. A helical transmembrane segment spans residues 165–185; the sequence is SLSSWCWILCAGFWAACSMLW. At 186-188 the chain is on the extracellular side; it reads KEQ. Residues 189–209 traverse the membrane as a helical segment; the sequence is GVTVLAVSAVYDVFVFHKLKM. Over 210–220 the chain is Cytoplasmic; sequence NQIISVVFKEK. Residues 221 to 241 traverse the membrane as a helical segment; the sequence is NVSFFFSVGLLFAWGVILLGA. Over 242 to 312 the chain is Extracellular; it reads RFYWMGNTPP…KTITDWRNIH (71 aa). A helical membrane pass occupies residues 313–333; the sequence is TVAFYILLILLAYSSLKGSAI. Residues 334–392 lie on the Cytoplasmic side of the membrane; the sequence is KRDCNGKVFMNGKQNTNGHSCQSDLEHKNAEQNPVIASKLENGVKHHNSHEMQLPSTEN. Residues 393–413 traverse the membrane as a helical segment; that stretch reads IVVLALSLLIVPFVPASNLFF. A topological domain (extracellular) is located at residue Y414. The chain crosses the membrane as a helical span at residues 415–435; it reads VGFVIAERVLYIPSMGFCLLV. The Cytoplasmic portion of the chain corresponds to 436 to 449; the sequence is TVGARALYIKAQKN. A helical transmembrane segment spans residues 450 to 470; the sequence is ILKNLLFYATAALIVFYGLKT. Residues 471 to 836 are Extracellular-facing; it reads VVRNGDWKNE…EKQGLKNSKT (366 aa). TPR repeat units follow at residues 493–526, 527–560, 561–594, 606–639, 643–676, 677–710, 711–744, 745–778, and 779–812; these read AKAW…RSNM, ADML…RPTL, ASGY…PDEN, TSCL…MPRQ, QSLY…KPDH, IPAH…DPNK, GNCY…DSSE, FDVV…RQNY, and PAAL…KPDD.

Belongs to the TMTC family.

The protein localises to the membrane. Its subcellular location is the endoplasmic reticulum. It catalyses the reaction a di-trans,poly-cis-dolichyl beta-D-mannosyl phosphate + L-seryl-[protein] = 3-O-(alpha-D-mannosyl)-L-seryl-[protein] + a di-trans,poly-cis-dolichyl phosphate + H(+). The catalysed reaction is a di-trans,poly-cis-dolichyl beta-D-mannosyl phosphate + L-threonyl-[protein] = 3-O-(alpha-D-mannosyl)-L-threonyl-[protein] + a di-trans,poly-cis-dolichyl phosphate + H(+). Its pathway is protein modification; protein glycosylation. Its function is as follows. Transfers mannosyl residues to the hydroxyl group of serine or threonine residues. The polypeptide is Protein O-mannosyl-transferase tmtc2 (tmtc2) (Xenopus laevis (African clawed frog)).